We begin with the raw amino-acid sequence, 324 residues long: MASCVLLHTGQKMPLIGLGTWKSNPGQVKAAIKYALSVGYRHIDCAAVYGNEIEIGEALKENVGPGKAVPREELFVTSKLWNTKHHPEDVEAALRKTLADLQLEYLDLYLMHWPYAFERGDNPFPKNDDGTIRYDSTHYKETWKALEALVAKGLVKALGLSNFNSRQIDDILSVASVRPAVLQVECHPYLAQNELIAHCQARGLEVTAYSPLGSSDRAWRHPDEPVLLEEPVVLALAEKHGRSPAQILLRWQVQRKVVCIPKSITPSRILQNIQVFDFTFSPEEMKQLDALNKHWRYIVPMITVDGKSVPRDAGHPLYPFNDPY.

The residue at position 3 (serine 3) is a Phosphoserine. Residues 10-19, threonine 20, and tryptophan 21 contribute to the NADP(+) site; that span reads GQKMPLIGLG. At serine 37 the chain carries Phosphoserine. Aspartate 44 contributes to the NADP(+) binding site. The Proton donor role is filled by tyrosine 49. Position 126 is an N6-acetyllysine; alternate (lysine 126). Lysine 126 is subject to N6-succinyllysine; alternate. Lysine 144 is subject to N6-succinyllysine. Residues serine 161, asparagine 162, serine 210, leucine 212, serine 214, serine 215, lysine 262, serine 263, isoleucine 264, threonine 265, arginine 268, glutamine 271, and asparagine 272 each contribute to the NADP(+) site. Serine 210 carries the phosphoserine modification.

Belongs to the aldo/keto reductase family.

The protein resides in the cytoplasm. Its subcellular location is the cytosol. The protein localises to the apical cell membrane. It catalyses the reaction a primary alcohol + NADP(+) = an aldehyde + NADPH + H(+). The catalysed reaction is L-gulonate + NADP(+) = aldehydo-D-glucuronate + NADPH + H(+). It carries out the reaction L-gulono-1,4-lactone + NADP(+) = D-glucurono-3,6-lactone + NADPH + H(+). The enzyme catalyses allyl alcohol + NADP(+) = acrolein + NADPH + H(+). It catalyses the reaction glycerol + NADP(+) = D-glyceraldehyde + NADPH + H(+). The catalysed reaction is glycerol + NADP(+) = L-glyceraldehyde + NADPH + H(+). It carries out the reaction hydroxyacetone + NADP(+) = methylglyoxal + NADPH + H(+). The enzyme catalyses 3-deoxyfructose + NADP(+) = 3-deoxyglucosone + NADPH + H(+). It catalyses the reaction (R)-mevalonate + NADP(+) = (R)-mevaldate + NADPH + H(+). The catalysed reaction is S-nitroso-CoA + NADPH + H(+) = sulfinamide-CoA + NADP(+). It carries out the reaction S-nitrosoglutathione + NADPH + H(+) = S-(hydroxysulfenamide)glutathione + NADP(+). In terms of biological role, catalyzes the NADPH-dependent reduction of a wide variety of carbonyl-containing compounds to their corresponding alcohols. Displays enzymatic activity towards endogenous metabolites such as aromatic and aliphatic aldehydes, ketones, monosaccharides and bile acids, with a preference for negatively charged substrates, such as glucuronate and succinic semialdehyde. Plays an important role by catalyzing the reduction of D-glucuronic acid and D-glucurono-gamma-lactone. Functions as a detoxifiying enzyme by reducing a range of toxic aldehydes. Reduces methylglyoxal and 3-deoxyglucosone, which are present at elevated levels under hyperglycemic conditions and are cytotoxic. Involved also in the detoxification of lipid-derived aldehydes like acrolein. Plays a role in the activation of procarcinogens, such as polycyclic aromatic hydrocarbon trans-dihydrodiols, and in the metabolism of various xenobiotics and drugs. Also acts as an inhibitor of protein S-nitrosylation by mediating degradation of S-nitroso-coenzyme A (S-nitroso-CoA), a cofactor required to S-nitrosylate proteins. S-nitroso-CoA reductase activity is involved in reprogramming intermediary metabolism in renal proximal tubules, notably by inhibiting protein S-nitrosylation of isoform 2 of PKM (PKM2). Also acts as a S-nitroso-glutathione reductase by catalyzing the NADPH-dependent reduction of S-nitrosoglutathione. Displays no reductase activity towards retinoids. This is Aldo-keto reductase family 1 member A1 (AKR1A1) from Cricetulus griseus (Chinese hamster).